A 74-amino-acid chain; its full sequence is Ubiquitin-like protein FUBI (74 aa).

It belongs to the ubiquitin family.

In terms of biological role, confers arsenite resistance. The protein is Ubiquitin-like protein FUBI (FAU) of Cricetulus griseus (Chinese hamster).